The sequence spans 214 residues: Adenylate kinase (214 aa).

10–15 contacts ATP; the sequence is GAGKGT. Residues 30–59 are NMP; it reads STGDMLRAAIKAGSELGNKAKAVMDAGQLV. AMP is bound by residues T31, R36, 57–59, 85–88, and Q92; these read QLV and GFPR. The LID stretch occupies residues 122-159; it reads GRRVHSGSGRVYHLVYNPPKVEGKDDVSGDDLSIRPDD. Residues R123 and 132–133 contribute to the ATP site; that span reads VY. AMP contacts are provided by R156 and R167. Position 200 (Q200) interacts with ATP.

This sequence belongs to the adenylate kinase family. In terms of assembly, monomer.

It localises to the cytoplasm. The catalysed reaction is AMP + ATP = 2 ADP. It functions in the pathway purine metabolism; AMP biosynthesis via salvage pathway; AMP from ADP: step 1/1. In terms of biological role, catalyzes the reversible transfer of the terminal phosphate group between ATP and AMP. Plays an important role in cellular energy homeostasis and in adenine nucleotide metabolism. This is Adenylate kinase from Colwellia psychrerythraea (strain 34H / ATCC BAA-681) (Vibrio psychroerythus).